The following is a 429-amino-acid chain: Adenylosuccinate synthetase (429 aa).

GTP contacts are provided by residues 12–18 (GDEGKGK) and 40–42 (GHT). The Proton acceptor role is filled by D13. Mg(2+) contacts are provided by D13 and G40. Residues 13-16 (DEGK), 38-41 (NAGH), T129, R143, Q223, T238, and R302 each bind IMP. H41 acts as the Proton donor in catalysis. 298 to 304 (TVTGRAR) is a substrate binding site. GTP contacts are provided by residues R304, 330–332 (KLD), and 412–414 (STS).

The protein belongs to the adenylosuccinate synthetase family. Homodimer. Mg(2+) is required as a cofactor.

It localises to the cytoplasm. It catalyses the reaction IMP + L-aspartate + GTP = N(6)-(1,2-dicarboxyethyl)-AMP + GDP + phosphate + 2 H(+). It functions in the pathway purine metabolism; AMP biosynthesis via de novo pathway; AMP from IMP: step 1/2. Functionally, plays an important role in the de novo pathway of purine nucleotide biosynthesis. Catalyzes the first committed step in the biosynthesis of AMP from IMP. This is Adenylosuccinate synthetase from Acidiphilium cryptum (strain JF-5).